Reading from the N-terminus, the 470-residue chain is MAKKKTSSSMARSQLAALLISLCFLSLASNAVGWSRRGEREEEDERRRHGGEGGRPYHFGEESFRHWTRTRHGRFSVLERFPDEQVVGAAVGGYRVAVLEAAPRAFLQPSHYDADEVFYVKEGEGVIVLLREGRKESFCVREGDAMVIPAGAIVYSANTHSSKWFRVVMLLNPVSTPGHFEEYFPVGGDRPESFFSAFSDDVLQAAFNTRREELEKVFERQREGGEITTAPEEQIRELSKSCSRGGGGGSGSEWEIKPSSLTGKSPYFSNNHGKLFELTGDECRHLKKLDLQIGLANITRGSMIAPNYNTRATKLAVVLQGSGYFEMACPHVSGGGSSERREREREHGRRREEEQGEEEHGERGEKARRYHKVRAQVREGSVIVIPASHPATIVASEGESLAVVCFFVGANHDEKVFLAGRNSPLRQLDDPAKKLVFGGSAAREADRVLAAQPEQILLRGPHGRGSVSDM.

The signal sequence occupies residues 1–34; it reads MAKKKTSSSMARSQLAALLISLCFLSLASNAVGW. Residues 36-52 show a composition bias toward basic and acidic residues; that stretch reads RRGEREEEDERRRHGGE. Disordered stretches follow at residues 36-57 and 240-261; these read RRGE…GRPY and KSCS…PSSL. Cupin type-1 domains lie at 57 to 215 and 259 to 445; these read YHFG…EELE and SSLT…AREA. Asn-297 is a glycosylation site (N-linked (GlcNAc...) asparagine). A disordered region spans residues 330-368; that stretch reads PHVSGGGSSERREREREHGRRREEEQGEEEHGERGEKAR. The span at 338 to 367 shows a compositional bias: basic and acidic residues; it reads SERREREREHGRRREEEQGEEEHGERGEKA. Zn(2+) is bound by residues His-347, Glu-352, and His-360.

The protein belongs to the 7S seed storage protein family. As to quaternary structure, homotrimer. The cofactor is Zn(2+).

The protein resides in the secreted. Functionally, seed storage protein. Globulin-like protein that acts as a zinc metalloprotease. Cleaves specifically between Leu-15 and Tyr-16 of insulin B chain, and Gln-1 and Leu-2 of neurotensin (NT) peptide in vitro. May play a role as an initiating endopeptidase in germinating seeds. The polypeptide is Cupincin (Oryza sativa subsp. indica (Rice)).